The following is a 192-amino-acid chain: Superoxide dismutase [Fe] (192 aa).

Fe cation contacts are provided by H27, H74, D157, and H161.

It belongs to the iron/manganese superoxide dismutase family. In terms of assembly, homodimer. Fe cation is required as a cofactor.

The enzyme catalyses 2 superoxide + 2 H(+) = H2O2 + O2. Destroys superoxide anion radicals which are normally produced within the cells and which are toxic to biological systems. This chain is Superoxide dismutase [Fe] (sodB), found in Bordetella pertussis (strain Tohama I / ATCC BAA-589 / NCTC 13251).